Reading from the N-terminus, the 175-residue chain is Ferritin light chain (175 aa).

N-acetylserine is present on serine 2. In terms of domain architecture, Ferritin-like diiron spans 7–156; it reads QNYSTEVEAA…DHLTNLRRLS (150 aa). Glutamate 54, glutamate 57, glutamate 58, glutamate 61, and glutamate 64 together coordinate Fe cation.

This sequence belongs to the ferritin family. As to quaternary structure, oligomer of 24 subunits. There are two types of subunits: L (light) chain and H (heavy) chain. The major chain can be light or heavy, depending on the species and tissue type. The functional molecule forms a roughly spherical shell with a diameter of 12 nm and contains a central cavity into which the insoluble mineral iron core is deposited. Interacts with NCOA4.

Its subcellular location is the cytoplasmic vesicle. It is found in the autophagosome. The protein localises to the cytoplasm. It localises to the autolysosome. Its function is as follows. Stores iron in a soluble, non-toxic, readily available form. Important for iron homeostasis. Iron is taken up in the ferrous form and deposited as ferric hydroxides after oxidation. Also plays a role in delivery of iron to cells. Mediates iron uptake in capsule cells of the developing kidney. Delivery to lysosomes by the cargo receptor NCOA4 for autophagic degradation and release or iron. This chain is Ferritin light chain (FTL), found in Felis catus (Cat).